A 102-amino-acid polypeptide reads, in one-letter code: 10 kDa heat shock protein, mitochondrial (102 aa).

Alanine 2 bears the N-acetylalanine mark. N6-acetyllysine is present on lysine 8. Lysine 28 carries the post-translational modification N6-succinyllysine. N6-acetyllysine; alternate is present on lysine 40. Lysine 40, lysine 54, and lysine 56 each carry N6-malonyllysine; alternate. Residues lysine 40, lysine 54, and lysine 56 each carry the N6-succinyllysine; alternate modification. Position 56 is an N6-acetyllysine; alternate (lysine 56). Serine 57 carries the phosphoserine modification. 2 positions are modified to N6-acetyllysine; alternate: lysine 66 and lysine 70. An N6-succinyllysine; alternate mark is found at lysine 66 and lysine 70. At threonine 79 the chain carries Phosphothreonine. Residues lysine 80 and lysine 86 each carry the N6-acetyllysine; alternate modification. An N6-succinyllysine; alternate mark is found at lysine 80 and lysine 86. At lysine 99 the chain carries N6-acetyllysine.

This sequence belongs to the GroES chaperonin family. As to quaternary structure, homoheptamer arranged in a ring structure. 2 heptameric Hsp10 rings interact with a Hsp60 tetradecamer in the structure of a back-to-back double heptameric ring to form the symmetrical football complex.

It localises to the mitochondrion matrix. Its function is as follows. Co-chaperonin implicated in mitochondrial protein import and macromolecular assembly. Together with Hsp60, facilitates the correct folding of imported proteins. May also prevent misfolding and promote the refolding and proper assembly of unfolded polypeptides generated under stress conditions in the mitochondrial matrix. The functional units of these chaperonins consist of heptameric rings of the large subunit Hsp60, which function as a back-to-back double ring. In a cyclic reaction, Hsp60 ring complexes bind one unfolded substrate protein per ring, followed by the binding of ATP and association with 2 heptameric rings of the co-chaperonin Hsp10. This leads to sequestration of the substrate protein in the inner cavity of Hsp60 where, for a certain period of time, it can fold undisturbed by other cell components. Synchronous hydrolysis of ATP in all Hsp60 subunits results in the dissociation of the chaperonin rings and the release of ADP and the folded substrate protein. The sequence is that of 10 kDa heat shock protein, mitochondrial (Hspe1) from Mus musculus (Mouse).